The sequence spans 101 residues: Urease subunit beta (101 aa).

Belongs to the urease beta subunit family. Heterotrimer of UreA (gamma), UreB (beta) and UreC (alpha) subunits. Three heterotrimers associate to form the active enzyme.

It is found in the cytoplasm. The enzyme catalyses urea + 2 H2O + H(+) = hydrogencarbonate + 2 NH4(+). Its pathway is nitrogen metabolism; urea degradation; CO(2) and NH(3) from urea (urease route): step 1/1. The polypeptide is Urease subunit beta (Cupriavidus metallidurans (strain ATCC 43123 / DSM 2839 / NBRC 102507 / CH34) (Ralstonia metallidurans)).